Reading from the N-terminus, the 171-residue chain is Co-chaperone protein HscB homolog (171 aa).

Residues 2-74 (NHFELFGLPN…VSRAEYILSE (73 aa)) form the J domain.

The protein belongs to the HscB family. In terms of assembly, interacts with HscA and stimulates its ATPase activity.

In terms of biological role, co-chaperone involved in the maturation of iron-sulfur cluster-containing proteins. Seems to help targeting proteins to be folded toward HscA. The polypeptide is Co-chaperone protein HscB homolog (Aliivibrio fischeri (strain ATCC 700601 / ES114) (Vibrio fischeri)).